A 227-amino-acid chain; its full sequence is MASSIFRDLPAEHPRHLIPALCAQFYNLGWVTGTGGGMSIKYNNEIYIAPSGVQKERMQPEDLFVQDIDGKDLQLPPEIKGLKKSQCTPLFMLAYRHRNAAAVIHTHSQHAVMATLLWPGKTFRCTHLEMIKGVYDEADKRYLRYDEQLVVPIIENTPHERDLADSMYAAMMEYPGCSAVLVRRHGVYVWGQTWEKTKTMSECYDYLFSIAVQMKTAGLNPEKFENA.

C87 lines the substrate pocket. Positions 105 and 107 each coordinate Zn(2+). Catalysis depends on E129, which acts as the Proton donor/acceptor. Zn(2+) is bound at residue H185.

This sequence belongs to the aldolase class II family. MtnB subfamily. Zn(2+) is required as a cofactor.

Its subcellular location is the cytoplasm. It carries out the reaction 5-(methylsulfanyl)-D-ribulose 1-phosphate = 5-methylsulfanyl-2,3-dioxopentyl phosphate + H2O. It functions in the pathway amino-acid biosynthesis; L-methionine biosynthesis via salvage pathway; L-methionine from S-methyl-5-thio-alpha-D-ribose 1-phosphate: step 2/6. Its function is as follows. Catalyzes the dehydration of methylthioribulose-1-phosphate (MTRu-1-P) into 2,3-diketo-5-methylthiopentyl-1-phosphate (DK-MTP-1-P). The polypeptide is Probable methylthioribulose-1-phosphate dehydratase (Drosophila mojavensis (Fruit fly)).